A 132-amino-acid polypeptide reads, in one-letter code: Holo-[acyl-carrier-protein] synthase (132 aa).

Mg(2+) contacts are provided by Asp-8 and Glu-62.

It belongs to the P-Pant transferase superfamily. AcpS family. Requires Mg(2+) as cofactor.

The protein localises to the cytoplasm. The catalysed reaction is apo-[ACP] + CoA = holo-[ACP] + adenosine 3',5'-bisphosphate + H(+). Its function is as follows. Transfers the 4'-phosphopantetheine moiety from coenzyme A to a Ser of acyl-carrier-protein. The chain is Holo-[acyl-carrier-protein] synthase from Leptothrix cholodnii (strain ATCC 51168 / LMG 8142 / SP-6) (Leptothrix discophora (strain SP-6)).